We begin with the raw amino-acid sequence, 337 residues long: Ral GTPase-activating protein subunit alpha-1 (337 aa).

In terms of assembly, component of the heterodimeric RalGAP1 complex with RALGAPB. Heterodimerization is required for activity. Interacts with the HLH region of TCF3/isoform E12.

It is found in the cytoplasm. Its subcellular location is the nucleus. Functionally, catalytic subunit of the heterodimeric RalGAP1 complex which acts as a GTPase activator for the Ras-like small GTPases RALA and RALB. This chain is Ral GTPase-activating protein subunit alpha-1, found in Sus scrofa (Pig).